Reading from the N-terminus, the 139-residue chain is Envelope glycoprotein N (139 aa).

Residues 1–100 (MACGKTESGD…CHSHFYGLSV (100 aa)) lie on the Virion surface side of the membrane. The chain crosses the membrane as a helical span at residues 101-121 (SSFASIWMMVNAIVFICAFGV). Residues 122–139 (FMRHWCYKAFTSDTAKGY) lie on the Intravirion side of the membrane.

It belongs to the herpesviridae glycoprotein N family. As to quaternary structure, interacts (via N-terminus) with gM (via N-terminus). The gM-gN heterodimer forms the gCII complex.

The protein localises to the virion membrane. It is found in the host membrane. It localises to the host Golgi apparatus. The protein resides in the host trans-Golgi network. Its function is as follows. Envelope glycoprotein necessary for proper maturation of gM and modulation of its membrane fusion activity. Also plays a critical role in virion morphogenesis. This is Envelope glycoprotein N from Mus musculus (Mouse).